A 199-amino-acid chain; its full sequence is Neurotrophic factor BDNF precursor form (199 aa).

The disordered stretch occupies residues 1–23; that stretch reads GQGSLAYPGLRTQGNLETLSGPN. A propeptide spanning residues 1–100 is cleaved from the precursor; sequence GQGSLAYPGL…AANMSMRVRR (100 aa). Residues 12 to 23 are compositionally biased toward polar residues; the sequence is TQGNLETLSGPN. The N-linked (GlcNAc...) asparagine glycan is linked to Asn93. Cys113 and Cys180 are disulfide-bonded.

It belongs to the NGF-beta family.

The protein resides in the secreted. In terms of biological role, promotes the survival of neuronal populations that are all located either in the central nervous system or directly connected to it. This chain is Neurotrophic factor BDNF precursor form (BDNF), found in Morelia spilota (Carpet python).